Reading from the N-terminus, the 377-residue chain is Modification methylase CviBIII (377 aa).

The protein belongs to the N(4)/N(6)-methyltransferase family.

The enzyme catalyses a 2'-deoxyadenosine in DNA + S-adenosyl-L-methionine = an N(6)-methyl-2'-deoxyadenosine in DNA + S-adenosyl-L-homocysteine + H(+). A gamma subtype methylase that recognizes the double-stranded sequence 5'-TCGA-3' and methylates A-4 on both strands. This is Modification methylase CviBIII (CVIBIIIM) from Paramecium bursaria Chlorella virus NC1A (PBCV-NC1A).